We begin with the raw amino-acid sequence, 470 residues long: Siroheme synthase 2 (470 aa).

The segment at 1 to 202 is precorrin-2 dehydrogenase /sirohydrochlorin ferrochelatase; that stretch reads MDYLPMFAKL…EDWQGAEQWL (202 aa). Residues 22 to 23 and 43 to 44 each bind NAD(+); these read EV and PE. Residue Ser126 is modified to Phosphoserine. The uroporphyrinogen-III C-methyltransferase stretch occupies residues 214-470; it reads GEVVLVGAGP…TCDLKLVSLA (257 aa). Pro223 serves as a coordination point for S-adenosyl-L-methionine. Asp246 acts as the Proton acceptor in catalysis. Residue Lys268 is the Proton donor of the active site. S-adenosyl-L-methionine is bound by residues 299–301, 329–330, Met381, and Gly410; these read GGD and TA.

The protein in the N-terminal section; belongs to the precorrin-2 dehydrogenase / sirohydrochlorin ferrochelatase family. This sequence in the C-terminal section; belongs to the precorrin methyltransferase family.

It carries out the reaction uroporphyrinogen III + 2 S-adenosyl-L-methionine = precorrin-2 + 2 S-adenosyl-L-homocysteine + H(+). It catalyses the reaction precorrin-2 + NAD(+) = sirohydrochlorin + NADH + 2 H(+). The enzyme catalyses siroheme + 2 H(+) = sirohydrochlorin + Fe(2+). It functions in the pathway cofactor biosynthesis; adenosylcobalamin biosynthesis; precorrin-2 from uroporphyrinogen III: step 1/1. It participates in cofactor biosynthesis; adenosylcobalamin biosynthesis; sirohydrochlorin from precorrin-2: step 1/1. The protein operates within porphyrin-containing compound metabolism; siroheme biosynthesis; precorrin-2 from uroporphyrinogen III: step 1/1. Its pathway is porphyrin-containing compound metabolism; siroheme biosynthesis; siroheme from sirohydrochlorin: step 1/1. It functions in the pathway porphyrin-containing compound metabolism; siroheme biosynthesis; sirohydrochlorin from precorrin-2: step 1/1. Functionally, multifunctional enzyme that catalyzes the SAM-dependent methylations of uroporphyrinogen III at position C-2 and C-7 to form precorrin-2 via precorrin-1. Then it catalyzes the NAD-dependent ring dehydrogenation of precorrin-2 to yield sirohydrochlorin. Finally, it catalyzes the ferrochelation of sirohydrochlorin to yield siroheme. The chain is Siroheme synthase 2 from Aeromonas hydrophila subsp. hydrophila (strain ATCC 7966 / DSM 30187 / BCRC 13018 / CCUG 14551 / JCM 1027 / KCTC 2358 / NCIMB 9240 / NCTC 8049).